A 144-amino-acid chain; its full sequence is Snake venom vascular endothelial growth factor toxin VR-1 (144 aa).

The first 24 residues, 1 to 24, serve as a signal peptide directing secretion; that stretch reads MAAYLLAVAILFCIQGWPSGTVQG. Position 25 is a pyrrolidone carboxylic acid (Q25). Disulfide bonds link C38-C80, C69-C115, and C73-C117. Residues 120–134 are compositionally biased toward basic and acidic residues; sequence RWKQGEPEGPKEPRR. The disordered stretch occupies residues 120–144; it reads RWKQGEPEGPKEPRRGGVRAKFPFD. A propeptide spanning residues 134–144 is cleaved from the precursor; that stretch reads RGGVRAKFPFD.

Belongs to the PDGF/VEGF growth factor family. Snake venom VEGF subfamily. Homodimer; disulfide-linked. Interacts with VEGF receptor-2 (KDR) with high affinity, but not with VEGF receptor-1 (Flt-1), VEGF receptor-3 (FLT4), and neuropilin-1 (NRP1). Expressed by the venom gland.

The protein resides in the secreted. Its function is as follows. Snake venom VEGFs may contribute to venom dispersion and prey subjugation by inducing vascular permeability and hypotension. This protein induces angiogenesis probably through VEGF receptor (KDR/VEGFR-2) signaling, as well as drastic hypotension. The hypotension is mediated by nitric oxide, which is produced by VEGF-activated endothelium NO synthase. May also induce vascular permeability. The polypeptide is Snake venom vascular endothelial growth factor toxin VR-1 (Daboia russelii (Russel's viper)).